The sequence spans 310 residues: Mitogen-activated protein kinase kinase 9 (310 aa).

One can recognise a Protein kinase domain in the interval 47–306; that stretch reads LEKLNVLGCG…APQLLAHPFL (260 aa). ATP-binding positions include 53 to 61 and K76; that span reads LGCGNGGIV. The Proton acceptor role is filled by D167. Phosphoserine is present on residues S195 and S201. Phosphothreonine is present on T205.

The protein belongs to the protein kinase superfamily. STE Ser/Thr protein kinase family. MAP kinase kinase subfamily. Post-translationally, phosphorylation at Ser-195 and Ser-201 by MAP kinase kinase kinases positively regulates kinase activity. Autophosphorylated.

The protein localises to the cytoplasm. The protein resides in the nucleus. The enzyme catalyses L-seryl-[protein] + ATP = O-phospho-L-seryl-[protein] + ADP + H(+). The catalysed reaction is L-threonyl-[protein] + ATP = O-phospho-L-threonyl-[protein] + ADP + H(+). It carries out the reaction L-tyrosyl-[protein] + ATP = O-phospho-L-tyrosyl-[protein] + ADP + H(+). Its function is as follows. MKK9-MPK3/MPK6 module phosphorylates and activates EIN3, leading to the promotion of EIN3-mediated transcription in ethylene signaling. Autophosphorylates and also phosphorylates MPK3 and MPK6. Plays an important role in ethylene and camalexin biosynthesis and in salt stress response. MKK9-MPK6 module positively regulates leaf senescence. In Arabidopsis thaliana (Mouse-ear cress), this protein is Mitogen-activated protein kinase kinase 9 (MKK9).